A 162-amino-acid chain; its full sequence is uncharacterized protein (162 aa).

The N-terminal stretch at 1–19 (MARVYILFFSVFFVFPLFS) is a signal peptide. Transmembrane regions (helical) follow at residues 53–75 (LSIGAFPIVTLLSFITYDIIRLI) and 105–127 (IVFGVAVGISVTIGLIDVTYRAV).

Its subcellular location is the cell membrane. This is an uncharacterized protein from Treponema pallidum (strain Nichols).